The following is a 375-amino-acid chain: Cell division protein ZapE (375 aa).

78–85 provides a ligand contact to ATP; sequence GGVGRGKT.

It belongs to the AFG1 ATPase family. ZapE subfamily. In terms of assembly, interacts with FtsZ.

It localises to the cytoplasm. In terms of biological role, reduces the stability of FtsZ polymers in the presence of ATP. The protein is Cell division protein ZapE of Escherichia coli O157:H7.